Here is a 242-residue protein sequence, read N- to C-terminus: Small ribosomal subunit protein uS2 (242 aa).

Belongs to the universal ribosomal protein uS2 family.

The protein is Small ribosomal subunit protein uS2 of Mannheimia succiniciproducens (strain KCTC 0769BP / MBEL55E).